The primary structure comprises 237 residues: U2 small nuclear ribonucleoprotein A' (237 aa).

3 LRR repeats span residues 53-74, 75-95, and 97-118; these read RTNI…GHND, TVHT…SRLP, and YLVN…QGLR. The region spanning 132–170 is the LRRCT domain; the sequence is NVICHKEQYRETVIALCPQLAVLDGERVRQAERQAAPQN. The disordered stretch occupies residues 161 to 182; the sequence is QAERQAAPQNEKTDTPTEGPQP.

The protein belongs to the U2 small nuclear ribonucleoprotein A family. As to quaternary structure, associated with the spliceosome.

Its subcellular location is the nucleus. Involved in pre-mRNA splicing. In Eremothecium gossypii (strain ATCC 10895 / CBS 109.51 / FGSC 9923 / NRRL Y-1056) (Yeast), this protein is U2 small nuclear ribonucleoprotein A' (LEA1).